Consider the following 504-residue polypeptide: MITLQNLPWILLYTGFLAIFLSRLFSNGKQSRDEKANGCQPPARYPQWDPIMGLDLVYSQVSALKNNRYLEWLRDLHAKMPKTFSLNFFGQRWIYSIEPEILKAVYATNFRDFGVEPIRRHSKGSMPFADKGVNTTDGEDWEFSRLLIKPFFERNVYTDTDRIKVHADHFLSLIPADGETFDAQPLVQRWFLDLTTEFIFGESMGSLAHPERADIAWTMLDVLRGGRLRAQMHRFMWARDWTWWLKAVYKVHDYVNPYIRSTLKELAEREERIKQGLPVGPERTDLVWSMATHLRDEELLRSQLCLIIVPNNDTTSIFISNCLWHLARHPEVWKKLREEVFALGEETPLTFEILRNMKYLNGVLNETHRVIPNNVTQVRACVQDTVLPVGGGPDGKWPVQVRKGDIVSVTKTVMYRDPDYWGSDADEFRPERFDGLRGTWNFLPFGGGPRRCPAQMMSQTEAAYMLCRLARTYSRIEARDPEPYTAVMRIGPSNKTGVKIALYK.

Residues 7–26 (LPWILLYTGFLAIFLSRLFS) traverse the membrane as a helical segment. 4 N-linked (GlcNAc...) asparagine glycosylation sites follow: asparagine 134, asparagine 312, asparagine 365, and asparagine 374. Cysteine 452 contributes to the heme binding site. The N-linked (GlcNAc...) asparagine glycan is linked to asparagine 494.

The protein belongs to the cytochrome P450 family. The cofactor is heme.

The protein localises to the membrane. It catalyses the reaction (3E,5S)-3-[(2E,4E,8S,10E,12Z)-1-hydroxy-4,8-dimethyltetradeca-2,4,10,12-tetraen-1-ylidene]-5-[(4-hydroxyphenyl)methyl]pyrrolidine-2,4-dione + reduced [NADPH--hemoprotein reductase] + O2 = 3-[(2E,4E,8S,10E,12Z)-4,8-dimethyltetradeca-2,4,10,12-tetraenoyl]-4-hydroxy-5-(4-hydroxyphenyl)-1,2-dihydropyridin-2-one + oxidized [NADPH--hemoprotein reductase] + 2 H2O. The protein operates within mycotoxin biosynthesis. Functionally, cytochrome P450 monooxygenase; part of the gene cluster that mediates the biosynthesis of ilicicolin H, a 4-hydroxy-2-pyridonealkaloid that has potent and broad antifungal activities by inhibiting the mitochondrial respiration chain. IccC catalyzes the ring expansion of the tetramate intermediate to the acyclic 2-pyridone intermediate that contains the trans bis-diene chain. The biosynthesis of ilicicolin H starts with formation of the tetramic acid by the hybrid PKS-NRPS synthetase iccA with the partnering trans-enoyl reductase iccB since iccA lacks a designated enoylreductase (ER) domain. The cytochrome P450 monooxygenase iccC then catalyzes the ring expansion of the tetramate to the acyclic 2-pyridone. The pericyclase iccD further converts the acyclic 2-pyridone into 8-epi-ilicicolin H. Finally, the epimerase iccE converts 8-epi-ilicicolin H into ilicicolin H via epimerization. IccA to iccE are sufficient for ilicicolin H biosynthesis and the roles of the remaining enzymes, iccF, iccG and iccH within the pathway have still to be determined. The sequence is that of Cytochrome P450 monooxygenase iccC from Talaromyces variabilis (Penicillium variabile).